Reading from the N-terminus, the 376-residue chain is Multicilin (376 aa).

Residues 165–213 are a coiled coil; it reads EQYWRDVADHNQKALGDALVENNQLQVSLTEKQEEIASLKEKNIQLNEL. Residues 230–261 form a disordered region; it reads ERPKHSSGATQGRLPVKRSLEDFYPQSNEPDS. The tract at residues 331-376 is TIRT domain; the sequence is TELEEDVSFRTSIKEHSTIRTLAFPQGNAFTIRTAAGGYKFRWVPN.

Belongs to the geminin family. Component of the EDM complex, at least composed of e2f4, e2f5, mcidas and tfdp1.

The protein localises to the nucleus. Functionally, transcription regulator specifically required for multiciliate cell differentiation. Acts in a multiprotein complex containing e2f4 and e2f5 that binds and activate genes required for centriole biogenesis. Activates genes required for centriole assembly (plk4, cep152) and genes specifically required for motile cilia formation (foxj1). Also promotes the deuterosome pathway of centriole biogenesis by activating expression of deup1, but not its paralog cep63. This Xenopus tropicalis (Western clawed frog) protein is Multicilin (mcidas).